The primary structure comprises 245 residues: tRNA1(Val) (adenine(37)-N6)-methyltransferase (245 aa).

The protein belongs to the methyltransferase superfamily. tRNA (adenine-N(6)-)-methyltransferase family.

It is found in the cytoplasm. It catalyses the reaction adenosine(37) in tRNA1(Val) + S-adenosyl-L-methionine = N(6)-methyladenosine(37) in tRNA1(Val) + S-adenosyl-L-homocysteine + H(+). Its function is as follows. Specifically methylates the adenine in position 37 of tRNA(1)(Val) (anticodon cmo5UAC). This chain is tRNA1(Val) (adenine(37)-N6)-methyltransferase, found in Erwinia tasmaniensis (strain DSM 17950 / CFBP 7177 / CIP 109463 / NCPPB 4357 / Et1/99).